The chain runs to 278 residues: Large ribosomal subunit protein uL2 (278 aa).

Basic residues-rich tracts occupy residues 210–219 (RKRWLGKRPQ) and 252–263 (KKSRGIKTRNSK). The segment at 210 to 278 (RKRWLGKRPQ…LIIRHRKGNK (69 aa)) is disordered.

Belongs to the universal ribosomal protein uL2 family. As to quaternary structure, part of the 50S ribosomal subunit. Forms a bridge to the 30S subunit in the 70S ribosome.

Functionally, one of the primary rRNA binding proteins. Required for association of the 30S and 50S subunits to form the 70S ribosome, for tRNA binding and peptide bond formation. It has been suggested to have peptidyltransferase activity; this is somewhat controversial. Makes several contacts with the 16S rRNA in the 70S ribosome. The protein is Large ribosomal subunit protein uL2 of Lactobacillus gasseri (strain ATCC 33323 / DSM 20243 / BCRC 14619 / CIP 102991 / JCM 1131 / KCTC 3163 / NCIMB 11718 / NCTC 13722 / AM63).